The following is a 172-amino-acid chain: Transcriptional repressor NrdR (172 aa).

The segment at 3–34 (CPYCRNTDTRVLDSRVADDGGSIRRRRTCSAC) is a zinc-finger region. Residues 46–136 (LTVLKRSGAS…VYRAFESADD (91 aa)) enclose the ATP-cone domain.

It belongs to the NrdR family. Requires Zn(2+) as cofactor.

Functionally, negatively regulates transcription of bacterial ribonucleotide reductase nrd genes and operons by binding to NrdR-boxes. In Nocardioides sp. (strain ATCC BAA-499 / JS614), this protein is Transcriptional repressor NrdR.